Here is a 667-residue protein sequence, read N- to C-terminus: DNA ligase (667 aa).

Residues 34–38, 83–84, and E117 contribute to the NAD(+) site; these read DYEFD and SL. K119 serves as the catalytic N6-AMP-lysine intermediate. Positions 140, 176, 289, and 313 each coordinate NAD(+). Positions 407, 410, 425, and 431 each coordinate Zn(2+). The BRCT domain occupies 591–667; it reads QVNRNFEGMS…ISEDEFMGMM (77 aa).

The protein belongs to the NAD-dependent DNA ligase family. LigA subfamily. The cofactor is Mg(2+). It depends on Mn(2+) as a cofactor.

The catalysed reaction is NAD(+) + (deoxyribonucleotide)n-3'-hydroxyl + 5'-phospho-(deoxyribonucleotide)m = (deoxyribonucleotide)n+m + AMP + beta-nicotinamide D-nucleotide.. Functionally, DNA ligase that catalyzes the formation of phosphodiester linkages between 5'-phosphoryl and 3'-hydroxyl groups in double-stranded DNA using NAD as a coenzyme and as the energy source for the reaction. It is essential for DNA replication and repair of damaged DNA. The polypeptide is DNA ligase (Chlorobium chlorochromatii (strain CaD3)).